Here is a 39-residue protein sequence, read N- to C-terminus: MSEGGKIPLWIVAVVAGMGVIAVVGIFFYGAYAGVGSAV.

A helical membrane pass occupies residues 7–27; that stretch reads IPLWIVAVVAGMGVIAVVGIF.

This sequence belongs to the PsbJ family. PSII is composed of 1 copy each of membrane proteins PsbA, PsbB, PsbC, PsbD, PsbE, PsbF, PsbH, PsbI, PsbJ, PsbK, PsbL, PsbM, PsbT, PsbX, PsbY, PsbZ, Psb30/Ycf12, peripheral proteins PsbO, CyanoQ (PsbQ), PsbU, PsbV and a large number of cofactors. It forms dimeric complexes.

The protein resides in the cellular thylakoid membrane. Functionally, this protein is a component of the reaction center of photosystem II. Its function is as follows. One of the components of the core complex of photosystem II (PSII). PSII is a light-driven water:plastoquinone oxidoreductase that uses light energy to abstract electrons from H(2)O, generating O(2) and a proton gradient subsequently used for ATP formation. It consists of a core antenna complex that captures photons, and an electron transfer chain that converts photonic excitation into a charge separation. This Picosynechococcus sp. (strain ATCC 27264 / PCC 7002 / PR-6) (Agmenellum quadruplicatum) protein is Photosystem II reaction center protein J.